The primary structure comprises 361 residues: Glyceraldehyde-3-phosphate dehydrogenase, glycosomal (361 aa).

NAD(+)-binding positions include 13 to 14 (RI), Asp-39, Gln-92, and Ser-135. D-glyceraldehyde 3-phosphate is bound by residues 166-168 (SCT), Thr-198, 227-228 (TG), and Arg-250. Cys-167 (nucleophile) is an active-site residue. Asn-336 is an NAD(+) binding site. The short motif at 359 to 361 (SKM) is the Microbody targeting signal element.

The protein belongs to the glyceraldehyde-3-phosphate dehydrogenase family. In terms of assembly, homotetramer.

It localises to the glycosome. The catalysed reaction is D-glyceraldehyde 3-phosphate + phosphate + NAD(+) = (2R)-3-phospho-glyceroyl phosphate + NADH + H(+). The protein operates within carbohydrate degradation; glycolysis; pyruvate from D-glyceraldehyde 3-phosphate: step 1/5. This Leishmania mexicana protein is Glyceraldehyde-3-phosphate dehydrogenase, glycosomal (GAPG).